We begin with the raw amino-acid sequence, 344 residues long: UDP-N-acetylenolpyruvoylglucosamine reductase (344 aa).

The 171-residue stretch at 17-187 (VDYACSELIS…TGVGIKLAKK (171 aa)) folds into the FAD-binding PCMH-type domain. R163 is an active-site residue. The active-site Proton donor is the S233. The active site involves E329.

Belongs to the MurB family. It depends on FAD as a cofactor.

Its subcellular location is the cytoplasm. The catalysed reaction is UDP-N-acetyl-alpha-D-muramate + NADP(+) = UDP-N-acetyl-3-O-(1-carboxyvinyl)-alpha-D-glucosamine + NADPH + H(+). The protein operates within cell wall biogenesis; peptidoglycan biosynthesis. Its function is as follows. Cell wall formation. The protein is UDP-N-acetylenolpyruvoylglucosamine reductase of Shewanella sediminis (strain HAW-EB3).